The following is a 317-amino-acid chain: tRNA-dihydrouridine(20a/20b) synthase [NAD(P)+]-like (317 aa).

Residues Pro-33–Val-35 and Gln-87 each bind FMN. Cys-116 (proton donor) is an active-site residue. FMN-binding positions include Lys-158, His-186, Asn-216 to Asp-218, and Ala-240 to Arg-241.

Belongs to the Dus family. Dus4 subfamily. It depends on FMN as a cofactor.

The enzyme catalyses 5,6-dihydrouridine(20a) in tRNA + NADP(+) = uridine(20a) in tRNA + NADPH + H(+). It catalyses the reaction 5,6-dihydrouridine(20a) in tRNA + NAD(+) = uridine(20a) in tRNA + NADH + H(+). The catalysed reaction is 5,6-dihydrouridine(20b) in tRNA + NAD(+) = uridine(20b) in tRNA + NADH + H(+). It carries out the reaction 5,6-dihydrouridine(20b) in tRNA + NADP(+) = uridine(20b) in tRNA + NADPH + H(+). Functionally, catalyzes the synthesis of dihydrouridine, a modified base found in the D-loop of most tRNAs. This is tRNA-dihydrouridine(20a/20b) synthase [NAD(P)+]-like (DUS4L) from Homo sapiens (Human).